Consider the following 291-residue polypeptide: Beta-lactamase CTX-M-97 (291 aa).

The N-terminal stretch at 1–28 (MMTQSIGRSMLTVMATLPLLFSSATLHA) is a signal peptide. Ser-73 functions as the Acyl-ester intermediate in the catalytic mechanism. 237–239 (KTG) serves as a coordination point for substrate.

Belongs to the class-A beta-lactamase family.

It carries out the reaction a beta-lactam + H2O = a substituted beta-amino acid. In terms of biological role, is probably capable of hydrolyzing cephalosporins such as ceftriaxone and ceftazidime, thus conferring resistance to these antibiotics. The protein is Beta-lactamase CTX-M-97 (bla) of Escherichia coli.